The sequence spans 149 residues: D-aminoacyl-tRNA deacylase (149 aa).

A Gly-cisPro motif, important for rejection of L-amino acids motif is present at residues 137 to 138 (GP).

The protein belongs to the DTD family. In terms of assembly, homodimer.

The protein resides in the cytoplasm. It catalyses the reaction glycyl-tRNA(Ala) + H2O = tRNA(Ala) + glycine + H(+). It carries out the reaction a D-aminoacyl-tRNA + H2O = a tRNA + a D-alpha-amino acid + H(+). Its function is as follows. An aminoacyl-tRNA editing enzyme that deacylates mischarged D-aminoacyl-tRNAs. Also deacylates mischarged glycyl-tRNA(Ala), protecting cells against glycine mischarging by AlaRS. Acts via tRNA-based rather than protein-based catalysis; rejects L-amino acids rather than detecting D-amino acids in the active site. By recycling D-aminoacyl-tRNA to D-amino acids and free tRNA molecules, this enzyme counteracts the toxicity associated with the formation of D-aminoacyl-tRNA entities in vivo and helps enforce protein L-homochirality. The sequence is that of D-aminoacyl-tRNA deacylase from Syntrophotalea carbinolica (strain DSM 2380 / NBRC 103641 / GraBd1) (Pelobacter carbinolicus).